Consider the following 630-residue polypeptide: A-type voltage-gated potassium channel KCND2 (630 aa).

Over 1–184 (MAAGVAAWLP…FENPHTSTMA (184 aa)) the chain is Cytoplasmic. Positions 2 to 20 (AAGVAAWLPFARAAAIGWM) are interaction with KCNIP1, KCNIP2, and other family members. T38 carries the post-translational modification Phosphothreonine. Positions 71–90 (ERDFFYHPETQQYFFDRDPD) are interaction with KCNIP1. Zn(2+) contacts are provided by H105, C111, C132, and C133. A helical transmembrane segment spans residues 185–206 (LVFYYVTGFFIAVSVIANVVET). Residues 207 to 226 (VPCGSSPGHIKELPCGERYA) are Extracellular-facing. Residues 227–249 (VAFFCLDTACVMIFTVEYLLRLA) form a helical membrane-spanning segment. Over 250–256 (AAPSRYR) the chain is Cytoplasmic. The chain crosses the membrane as a helical span at residues 257–281 (FVRSVMSIIDVVAILPYYIGLVMTD). At 282–287 (NEDVSG) the chain is on the extracellular side. The helical; Voltage-sensor transmembrane segment at 288 to 307 (AFVTLRVFRVFRIFKFSRHS) threads the bilayer. Residues 308-321 (QGLRILGYTLKSCA) are Cytoplasmic-facing. Positions 308 to 321 (QGLRILGYTLKSCA) are S4-S5 linker. Residues 322–345 (SELGFLLFSLTMAIIIFATVMFYA) traverse the membrane as a helical segment. Over 346 to 357 (EKGSSASKFTSI) the chain is Extracellular. The segment at residues 358 to 369 (PAAFWYTIVTMT) is an intramembrane region (helical). K(+) is bound by residues T370, L371, G372, and Y373. The Selectivity filter signature appears at 370–375 (TLGYGD). The stretch at 370–377 (TLGYGDMV) is an intramembrane region. The Extracellular portion of the chain corresponds to 378 to 380 (PKT). The chain crosses the membrane as a helical span at residues 381–403 (IAGKIFGSICSLSGVLVIALPVP). At 404–630 (VIVSNFSRIY…GGNIVRVSAL (227 aa)) the chain is on the cytoplasmic side. At S438 the chain carries Phosphoserine. Residues 474–489 (FETQHHHLLHCLEKTT) are required for dendritic targeting. Residues 474 to 630 (FETQHHHLLH…GGNIVRVSAL (157 aa)) form an important for normal channel activation and inactivation, for interaction with KCNIP2, and probably other family members as well region. 4 positions are modified to phosphoserine: S548, S552, S572, and S575. Positions 600–623 (IPTPPVTTPEGDDRPESPEYSGGN) are disordered. Phosphothreonine is present on residues T602 and T607. S616 is subject to Phosphoserine. The PDZ-binding motif lies at 627 to 630 (VSAL).

It belongs to the potassium channel family. D (Shal) (TC 1.A.1.2) subfamily. Kv4.2/KCND2 sub-subfamily. Homotetramer or heterotetramer with KCND1 or KCND3. Associates with the regulatory subunits KCNIP1, KCNIP2, KCNIP3 and KCNIP4. Interacts with DPP6, DPP10, DLG4 and DLG1. In vivo, probably exists as heteromeric complex containing variable proportions of KCND1, KCND2, KCND3, KCNIP1, KCNIP2, KCNIP3, KCNIP4, DPP6 and DPP10. The tetrameric channel can associate with up to four regulatory subunits, such as KCNIP2 or KCNIP4. Interaction with KCNIP3 promotes tetramerization and formation of a functional potassium channel. Interaction with four KCNIP4 chains does not reduce interaction with DPP10. Probably part of a complex consisting of KCNIP1, KCNIP2 isoform 3 and KCND2. Interacts with FLNA and FLNC. Interacts with NCS1/FREQ. Identified in a complex with cAMP-dependent protein kinase (PKA), CAV3, AKAP6 and KCND3 in cardiac myocytes. Interacts (via S1 and S2 helices) with DPP6; this interaction stabilizes the conformation of the S1-S2 helices and facilitates S4 conformational change, including S4 sliding up and down, thereby accelerating activation, inactivation, and recovery. Post-translationally, phosphorylation at Ser-438 in response to MAPK activation is increased in stimulated dendrites. Interaction with KCNIP2 and DPP6 propomtes phosphorylation by PKA at Ser-552. Phosphorylation at Ser-552 has no effect on interaction with KCNIP3, but is required for the regulation of channel activity by KCNIP3. Phosphorylation at Ser-552 leads to KCND2 internalization. Phosphorylated by MAPK in response to signaling via the metabotropic glutamate receptor GRM5. Phosphorylation at Ser-616 is required for the down-regulation of neuronal A-type currents in response to signaling via GRM5. In terms of tissue distribution, detected in brain frontal cortex.

Its subcellular location is the cell membrane. It is found in the cell projection. It localises to the dendrite. The protein resides in the synapse. The protein localises to the perikaryon. Its subcellular location is the postsynaptic cell membrane. It is found in the dendritic spine. It localises to the sarcolemma. The protein resides in the cell junction. The protein localises to the membrane. Its subcellular location is the caveola. The enzyme catalyses K(+)(in) = K(+)(out). Its function is as follows. Voltage-gated potassium channel that mediates transmembrane potassium transport in excitable membranes, primarily in the brain. Mediates the major part of the dendritic A-type current I(SA) in brain neurons. This current is activated at membrane potentials that are below the threshold for action potentials. It regulates neuronal excitability, prolongs the latency before the first spike in a series of action potentials, regulates the frequency of repetitive action potential firing, shortens the duration of action potentials and regulates the back-propagation of action potentials from the neuronal cell body to the dendrites. Contributes to the regulation of the circadian rhythm of action potential firing in suprachiasmatic nucleus neurons, which regulates the circadian rhythm of locomotor activity. Functions downstream of the metabotropic glutamate receptor GRM5 and plays a role in neuronal excitability and in nociception mediated by activation of GRM5. Mediates the transient outward current I(to) in rodent heart left ventricle apex cells, but not in human heart, where this current is mediated by another family member. Forms tetrameric potassium-selective channels through which potassium ions pass in accordance with their electrochemical gradient. The channel alternates between opened and closed conformations in response to the voltage difference across the membrane. Can form functional homotetrameric channels and heterotetrameric channels that contain variable proportions of KCND2 and KCND3; channel properties depend on the type of pore-forming alpha subunits that are part of the channel. In vivo, membranes probably contain a mixture of heteromeric potassium channel complexes. Interaction with specific isoforms of the regulatory subunits KCNIP1, KCNIP2, KCNIP3 or KCNIP4 strongly increases expression at the cell surface and thereby increases channel activity; it modulates the kinetics of channel activation and inactivation, shifts the threshold for channel activation to more negative voltage values, shifts the threshold for inactivation to less negative voltages and accelerates recovery after inactivation. Likewise, interaction with DPP6 or DPP10 promotes expression at the cell membrane and regulates both channel characteristics and activity. Upon depolarization, the channel goes from a resting closed state (C state) to an activated but non-conducting state (C* state), from there, the channel may either inactivate (I state) or open (O state). This chain is A-type voltage-gated potassium channel KCND2, found in Oryctolagus cuniculus (Rabbit).